We begin with the raw amino-acid sequence, 271 residues long: Interleukin-1 alpha (271 aa).

A propeptide spanning residues M1–R112 is cleaved from the precursor. At K82 the chain carries N6-acetyllysine. 2 N6-myristoyl lysine lipidation sites follow: K82 and K83. Residues K82 to L86 form a nuclear localization signal (NLS) region. S87 carries the post-translational modification Phosphoserine. N-linked (GlcNAc...) asparagine glycosylation is found at N102 and N141.

This sequence belongs to the IL-1 family. In terms of assembly, monomer. Interacts with TMED10; the interaction mediates the translocation from the cytoplasm into the ERGIC (endoplasmic reticulum-Golgi intermediate compartment) and thereby secretion. Interacts with IL1R1. Interacts with S100A13; this interaction is the first step in the export of IL1A, followed by direct translocation of this complex across the plasma membrane. Acetylated within its nuclear localization sequence, which impacts subcellular localization. In terms of processing, proteolytic processed by CAPN1 in a calcium-dependent manner. Cleavage from 31 kDa precursor to 18 kDa biologically active molecules. Post-translationally, phosphorylated. Phosphorylation greatly enhances susceptibility to digestion and promotes the conversion of pre-IL1A alpha to the biologically active IL1A.

Its subcellular location is the nucleus. The protein localises to the cytoplasm. The protein resides in the secreted. Its function is as follows. Cytokine constitutively present intracellularly in nearly all resting non-hematopoietic cells that plays an important role in inflammation and bridges the innate and adaptive immune systems. After binding to its receptor IL1R1 together with its accessory protein IL1RAP, forms the high affinity interleukin-1 receptor complex. Signaling involves the recruitment of adapter molecules such as MYD88, IRAK1 or IRAK4. In turn, mediates the activation of NF-kappa-B and the three MAPK pathways p38, p42/p44 and JNK pathways. Within the cell, acts as an alarmin and cell death results in its liberation in the extracellular space after disruption of the cell membrane to induce inflammation and alert the host to injury or damage. In addition to its role as a danger signal, which occurs when the cytokine is passively released by cell necrosis, directly senses DNA damage and acts as a signal for genotoxic stress without loss of cell integrity. This is Interleukin-1 alpha (IL1A) from Homo sapiens (Human).